A 195-amino-acid polypeptide reads, in one-letter code: Imidazoleglycerol-phosphate dehydratase (195 aa).

Belongs to the imidazoleglycerol-phosphate dehydratase family.

Its subcellular location is the cytoplasm. It catalyses the reaction D-erythro-1-(imidazol-4-yl)glycerol 3-phosphate = 3-(imidazol-4-yl)-2-oxopropyl phosphate + H2O. Its pathway is amino-acid biosynthesis; L-histidine biosynthesis; L-histidine from 5-phospho-alpha-D-ribose 1-diphosphate: step 6/9. This chain is Imidazoleglycerol-phosphate dehydratase, found in Bordetella avium (strain 197N).